A 347-amino-acid chain; its full sequence is Endothelin receptor type B (347 aa).

Residues 1 to 7 (EIKETFK) are Extracellular-facing. A helical transmembrane segment spans residues 8-32 (YINTVVSCLVFVLGIIGNSTLLRII). At 33-43 (YKNKCMRNGPN) the chain is on the cytoplasmic side. The chain crosses the membrane as a helical span at residues 44–69 (ILIASLALGDLLHIIIDIPISVYKLL). The Extracellular portion of the chain corresponds to 70–81 (AEDWPFGVEMCK). Cysteine 80 and cysteine 161 are oxidised to a cystine. A helical membrane pass occupies residues 82-103 (LVPFIQKASVGITVLSLCALSI). Topologically, residues 104–124 (DRYRAVASWSRIKGIGVPKWT) are cytoplasmic. Residues 125-149 (AVEIVLIWVISVVLAVPEAIAFDMI) form a helical membrane-spanning segment. Over 150 to 177 (TMEYRGKDLRICLLHPTQKTSFMMFYKQ) the chain is Extracellular. A helical membrane pass occupies residues 178 to 202 (AKDWWLFSFYFCLPLAITALFYTLM). The Cytoplasmic portion of the chain corresponds to 203–230 (TCEMLRKKSGMQIALNDHLKQRREVAKT). The chain crosses the membrane as a helical span at residues 231–256 (VFCLVLVFALCWLPLHLSRILKLTIY). Over 257–268 (DQKDPNRCELLS) the chain is Extracellular. A helical transmembrane segment spans residues 269-295 (FFLVMDYIGINMASLNSCINPIALYLV). The Cytoplasmic portion of the chain corresponds to 296 to 347 (SKRFQNCFKSCLCCWCQSKDLLSLEERQSCLKFKANDHGYDNFRSSNKYSSS). Residues cysteine 309 and cysteine 311 are each lipidated (S-palmitoyl cysteine).

It belongs to the G-protein coupled receptor 1 family. Endothelin receptor subfamily. EDNRB sub-subfamily.

It is found in the cell membrane. In terms of biological role, non-specific receptor for endothelin 1, 2, and 3. Mediates its action by association with G proteins that activate a phosphatidylinositol-calcium second messenger system. The chain is Endothelin receptor type B (EDNRB) from Coturnix japonica (Japanese quail).